The primary structure comprises 170 residues: Neurotensin/neuromedin N (170 aa).

The first 23 residues, 1–23 (MMAGMKIQLVCMILLAFSSWSLC), serve as a signal peptide directing secretion.

It belongs to the neurotensin family. As to quaternary structure, interacts with NTSR1. Interacts with SORT1. Interacts with SORL1. Neurotensin is cleaved and degraded by Angiotensin-converting enzyme (ACE) and neprilysin (MME).

The protein resides in the secreted. It is found in the cytoplasmic vesicle. Its subcellular location is the secretory vesicle. Functionally, neurotensin may play an endocrine or paracrine role in the regulation of fat metabolism. It causes contraction of smooth muscle. The chain is Neurotensin/neuromedin N (NTS) from Canis lupus familiaris (Dog).